A 356-amino-acid chain; its full sequence is 4-hydroxybenzoate polyprenyltransferase, mitochondrial (356 aa).

The transit peptide at 1-44 directs the protein to the mitochondrion; sequence MITRSIGIARRSNSINCIVGSNTSTSYSLDESTKRWISTSTKQP. Transmembrane regions (helical) follow at residues 71-91, 93-113, 150-170, 195-215, 269-289, and 332-352; these read VDKP…IAMA, PAGQ…AFLM, AIGL…QLNW, WPQF…WCAL, WLSA…IASD, and IILF…QILI.

It belongs to the UbiA prenyltransferase family. The cofactor is Mg(2+).

It is found in the mitochondrion inner membrane. It carries out the reaction an all-trans-polyprenyl diphosphate + 4-hydroxybenzoate = a 4-hydroxy-3-(all-trans-polyprenyl)benzoate + diphosphate. Its pathway is cofactor biosynthesis; ubiquinone biosynthesis. Catalyzes the prenylation of para-hydroxybenzoate (PHB) with an all-trans polyprenyl group. Mediates the second step in the final reaction sequence of coenzyme Q (CoQ) biosynthesis, which is the condensation of the polyisoprenoid side chain with PHB, generating the first membrane-bound Q intermediate. This is 4-hydroxybenzoate polyprenyltransferase, mitochondrial (coq-2) from Caenorhabditis elegans.